Reading from the N-terminus, the 423-residue chain is Maintenance of mitochondrial morphology protein 1 (423 aa).

Residues 1-15 (MWLDDVASELSFTQG) lie on the Lumenal side of the membrane. The helical transmembrane segment at 16 to 36 (LLLGQLSIVILIGAFIKFFIF) threads the bilayer. Over 37–423 (GDPPSPDVSA…PGSMPGLSMA (387 aa)) the chain is Cytoplasmic. Positions 110 to 322 (QPESLDWFNV…EPRFQQIELP (213 aa)) constitute an SMP-LTD domain. Disordered stretches follow at residues 327 to 370 (RKKN…EAET) and 394 to 423 (SEEG…LSMA). The span at 350 to 367 (RSRDVERDLREEARKEVE) shows a compositional bias: basic and acidic residues.

Belongs to the MMM1 family. As to quaternary structure, homodimer. Component of the ER-mitochondria encounter structure (ERMES) or MDM complex, composed of mmm1, mdm10, mdm12 and mdm34. A mmm1 homodimer associates with one molecule of mdm12 on each side in a pairwise head-to-tail manner, and the SMP-LTD domains of mmm1 and mdm12 generate a continuous hydrophobic tunnel for phospholipid trafficking.

It is found in the endoplasmic reticulum membrane. Functionally, component of the ERMES/MDM complex, which serves as a molecular tether to connect the endoplasmic reticulum (ER) and mitochondria. Components of this complex are involved in the control of mitochondrial shape and protein biogenesis, and function in nonvesicular lipid trafficking between the ER and mitochondria. The mdm12-mmm1 subcomplex functions in the major beta-barrel assembly pathway that is responsible for biogenesis of all outer membrane beta-barrel proteins, and acts in a late step after the SAM complex. The mdm10-mdm12-mmm1 subcomplex further acts in the TOM40-specific pathway after the action of the mdm12-mmm1 complex. Essential for establishing and maintaining the structure of mitochondria and maintenance of mtDNA nucleoids. The polypeptide is Maintenance of mitochondrial morphology protein 1 (Sclerotinia sclerotiorum (strain ATCC 18683 / 1980 / Ss-1) (White mold)).